A 329-amino-acid polypeptide reads, in one-letter code: Fructose-1,6-bisphosphatase class 1 (329 aa).

Positions 84, 103, 105, and 106 each coordinate Mg(2+). Residues 106–109 (DGSS), Asn196, and Lys262 each bind substrate. Glu268 is a Mg(2+) binding site.

Belongs to the FBPase class 1 family. As to quaternary structure, homotetramer. Mg(2+) is required as a cofactor.

It is found in the cytoplasm. The catalysed reaction is beta-D-fructose 1,6-bisphosphate + H2O = beta-D-fructose 6-phosphate + phosphate. It participates in carbohydrate biosynthesis; gluconeogenesis. The polypeptide is Fructose-1,6-bisphosphatase class 1 (Shewanella sediminis (strain HAW-EB3)).